Reading from the N-terminus, the 300-residue chain is Beta-lactamase (300 aa).

The signal sequence occupies residues Met-1 to Ala-29. Ser-75 acts as the Acyl-ester intermediate in catalysis. Residue Lys-239 to Gly-241 participates in substrate binding.

This sequence belongs to the class-A beta-lactamase family. As to quaternary structure, monomer.

The catalysed reaction is a beta-lactam + H2O = a substituted beta-amino acid. Functionally, hydrolyzes broad-spectrum beta-lactam antibiotics. Active against cephalosporins such as cefuroxime and cefotaxime. The sequence is that of Beta-lactamase (blaB) from Proteus vulgaris.